Reading from the N-terminus, the 156-residue chain is Probable cyclic pyranopterin monophosphate synthase (156 aa).

Residues 74 to 76 (LCH) and 110 to 111 (ME) each bind substrate. Aspartate 125 is a catalytic residue.

Belongs to the MoaC family. As to quaternary structure, homohexamer; trimer of dimers.

The enzyme catalyses (8S)-3',8-cyclo-7,8-dihydroguanosine 5'-triphosphate = cyclic pyranopterin phosphate + diphosphate. Its pathway is cofactor biosynthesis; molybdopterin biosynthesis. Functionally, catalyzes the conversion of (8S)-3',8-cyclo-7,8-dihydroguanosine 5'-triphosphate to cyclic pyranopterin monophosphate (cPMP). The protein is Probable cyclic pyranopterin monophosphate synthase of Thermococcus kodakarensis (strain ATCC BAA-918 / JCM 12380 / KOD1) (Pyrococcus kodakaraensis (strain KOD1)).